The primary structure comprises 422 residues: Immunoglobulin mu Fc receptor (422 aa).

The signal sequence occupies residues 1-16; that stretch reads MDFWLWLLYFLPVSGA. Residues 18-262 are Extracellular-facing; it reads RVLPEVQLNV…DRGLHIPIPE (245 aa). Residues 24 to 121 enclose the Ig-like domain; the sequence is QLNVEWGGSI…GKTQKITLNV (98 aa). 2 disulfide bridges follow: cysteine 37-cysteine 103 and cysteine 49-cysteine 58. Threonine 91 carries the phosphothreonine modification. A helical membrane pass occupies residues 263–283; sequence FHILIPTFLGFLLLVLLGLVV. Residues 284–422 lie on the Cytoplasmic side of the membrane; the sequence is KRAIQRRRAS…YAPGPRSSCP (139 aa). Positions 290 to 308 are enriched in basic residues; that stretch reads RRASSRRAGRLAMRRRGRG. Disordered regions lie at residues 290–367 and 391–422; these read RRAS…QVLE and VNLE…SSCP. Positions 344–363 are enriched in low complexity; that stretch reads LGPAEAPLLNAPASASPASP.

In terms of assembly, interacts (via Ig-like domain) with IGHM (via CH4/Cmu4 domain), both secreted and membrane-bound IgM; the interaction is glycan-independent and multivalent theoretically involving up to eight binding sites for the IgM pentamer. Post-translationally, phosphorylated on both Tyr and Ser residues. In terms of processing, O-glycosylated. Sialylated. O-linked glycans regulate trafficking to the plasma membrane. Expressed in pre-B cells, immature and mature B cells residing in primary and secondary lymphoid organs (at protein level). In the spleen, highly expressed in follicular and marginal zone B cells and at lower levels in germinal center B cells and plasma cells. Expressed in splenic dendritic cells and in granulocytes. In the peritoneum, expressed in B1-a and B-2 cell lineages. In the bone marrow, expressed in immature B cells and at a lower level in pro- and pre-B cells (at protein level). Expressed in M cells (at protein level).

It localises to the cell membrane. Its subcellular location is the early endosome membrane. The protein resides in the golgi apparatus. It is found in the trans-Golgi network membrane. The protein localises to the lysosome membrane. High-affinity Fc receptor for immunoglobulin M (IgM), both secreted and membrane-bound IgM. Primarily regulates IgM transport and homeostasis. In lymphoid cells, enables exocytosis of membrane-bound IgM on the plasma membrane as well as endocytosis of IgM-antigen complexes toward lysosomes for degradation. In mucosal epithelium, mediates retrotranscytosis of antigen-IgM complexes across mucosal M cells toward antigen-presenting cells in mucosal lymphoid tissues. Triggers costimulatory signaling and mediates most of IgM effector functions involved in B cell development and primary immune response to infection. Likely limits tonic IgM BCR signaling to self-antigens for proper negative selection of autoreactive B cells in the bone marrow and for the maintenance of regulatory B cell pool in peripheral lymphoid organs. Mediates antibody responses to T cell-dependent and T cell-independent antigens and promotes induction of an efficient neutralizing IgG response. Engages in cross-talk with antigen-receptor signaling via the non-canonical NF-kappa-B, MAP kinases and calcium signaling pathways. In Mus musculus (Mouse), this protein is Immunoglobulin mu Fc receptor.